We begin with the raw amino-acid sequence, 510 residues long: ATP synthase subunit alpha, mitochondrial (510 aa).

171–178 (GDRQTGKT) is a binding site for ATP.

It belongs to the ATPase alpha/beta chains family. In terms of assembly, F-type ATPases have 2 components, CF(1) - the catalytic core - and CF(0) - the membrane proton channel. CF(1) has five subunits: alpha(3), beta(3), gamma(1), delta(1), epsilon(1). CF(0) has three main subunits: a, b and c.

Its subcellular location is the mitochondrion. The protein localises to the mitochondrion inner membrane. Its function is as follows. Mitochondrial membrane ATP synthase (F(1)F(0) ATP synthase or Complex V) produces ATP from ADP in the presence of a proton gradient across the membrane which is generated by electron transport complexes of the respiratory chain. F-type ATPases consist of two structural domains, F(1) - containing the extramembraneous catalytic core, and F(0) - containing the membrane proton channel, linked together by a central stalk and a peripheral stalk. During catalysis, ATP synthesis in the catalytic domain of F(1) is coupled via a rotary mechanism of the central stalk subunits to proton translocation. Subunits alpha and beta form the catalytic core in F(1). Rotation of the central stalk against the surrounding alpha(3)beta(3) subunits leads to hydrolysis of ATP in three separate catalytic sites on the beta subunits. Subunit alpha does not bear the catalytic high-affinity ATP-binding sites. The sequence is that of ATP synthase subunit alpha, mitochondrial (ATPA) from Helianthus annuus (Common sunflower).